The following is a 638-amino-acid chain: Growth hormone receptor (638 aa).

Residues 1 to 18 form the signal peptide; the sequence is MDLWRVFLTLALAVSSDM. At 19-265 the chain is on the extracellular side; it reads FPGSGATPAT…TLAACEEDFR (247 aa). 2 disulfide bridges follow: Cys-56–Cys-66 and Cys-101–Cys-112. A glycan (N-linked (GlcNAc...) asparagine) is linked at Asn-115. Cys-126 and Cys-140 form a disulfide bridge. One can recognise a Fibronectin type-III domain in the interval 151–254; that stretch reads PPIGLNWTLL…EVLRVTFPQM (104 aa). N-linked (GlcNAc...) asparagine glycosylation is found at Asn-156, Asn-161, and Asn-200. Positions 240–244 match the WSXWS motif motif; sequence YSEFS. The chain crosses the membrane as a helical span at residues 266-289; sequence FPWFLIIIFGIFGVAVMLFVVIFS. The Cytoplasmic segment spans residues 290 to 638; that stretch reads KQQRIKMLIL…STDQLNKIMQ (349 aa). The segment at 295 to 380 is required for JAK2 binding; it reads KMLILPPVPV…QEKSAGILGA (86 aa). Residues 298–306 carry the Box 1 motif motif; that stretch reads ILPPVPVPK. The short motif at 341 to 350 is the UbE motif element; that stretch reads DSWVEFIELD. Phosphoserine is present on Ser-342. The disordered stretch occupies residues 357–389; it reads KTEESDTDRLLSDDQEKSAGILGAKDDDSGRTS. Basic and acidic residues predominate over residues 363-373; the sequence is TDRLLSDDQEK. Residues Tyr-487 and Tyr-594 each carry the phosphotyrosine modification.

It belongs to the type I cytokine receptor family. Type 1 subfamily. In terms of assembly, on growth hormone (GH) binding, forms homodimers and binds JAK2 via a box 1-containing domain. The soluble form (GHBP) is produced by phorbol ester-promoted proteolytic cleavage at the cell surface (shedding) by ADAM17/TACE. Shedding is inhibited by growth hormone (GH) binding to the receptor probably due to a conformational change in GHR rendering the receptor inaccessible to ADAM17. In terms of processing, on GH binding, phosphorylated on tyrosine residues in the cytoplasmic domain by JAK2. Phosphorylation on either (or all of) Tyr-534, Tyr-566 and/or Tyr-627 is required for STAT5 activation. Phosphorylation on Tyr-333 would seem necessary for JAK2 activation. Post-translationally, ubiquitinated by the ECS(SOCS2) complex following ligand-binding and phosphorylation by JAK2, leading to its degradation by the proteasome. Regulation by the ECS(SOCS2) complex acts as a negative feedback loop of growth hormone receptor signaling. Ubiquitination is not sufficient for GHR internalization. As to expression, highest expression in liver. Also expressed in heart, kidney and muscle.

The protein resides in the cell membrane. It is found in the secreted. Receptor for pituitary gland growth hormone involved in regulating postnatal body growth. On ligand binding, couples to, and activates the JAK2/STAT5 pathway. Functionally, receptor for pituitary gland growth hormone (GH1) involved in regulating postnatal body growth. On ligand binding, couples to the JAK2/STAT5 pathway. In terms of biological role, the soluble form (GHBP) acts as a reservoir of growth hormone in plasma and may be a modulator/inhibitor of GH signaling. The protein is Growth hormone receptor (Ghr) of Rattus norvegicus (Rat).